We begin with the raw amino-acid sequence, 135 residues long: Protein PsiE homolog (135 aa).

Transmembrane regions (helical) follow at residues 20-40, 54-74, 82-102, and 107-127; these read VGLI…TIHL, YMLI…ALIV, HFPL…LIIV, and PIDT…LYLA.

This sequence belongs to the PsiE family.

It is found in the cell inner membrane. This chain is Protein PsiE homolog, found in Yersinia pestis (strain Pestoides F).